Here is a 468-residue protein sequence, read N- to C-terminus: MSKQQIGVVGMAVMGRNLALNIESRGYTVSIFNRSREKTEEVIAENPGKKLAPYYTVKEFVESLETPRRILLMVKAGAGTDAAIDSLKPYLDKGDIIIDGGNTFFQDTIRRNRELSAEGFNFIGTGVSGGEEGALKGPSIMPGGQKEAYELVAPILTKIAAVAEDGEPCVTYIGADGAGHYVKMVHNGIEYGDMQLIAEAYSLLKGGLNLSNEELAQTFTEWNNGELSSYLIDITKDIFTKKDEDGNYLVDVILDEAANKGTGKWTSQSALDLGEPLSLITESVFARYISSLKDQRVAASKVLSGPQAQSAGDKAEFIEKVRSALYLGKIVSYAQGFSQLRAASEEYNWDLNYGEIAKIFRAGCIIRAQFLQKITDAYAENPQIANLLLAPYFKQIADDYQQALRDVVAYAVQNGIPVPTFAAAVAYYDSYRAAVLPANLIQAQRDYFGAHTYKRIDKEGVFHTEWLD.

NADP(+) is bound by residues 10-15 (GMAVMG), 33-35 (NRS), 74-76 (VKA), and asparagine 102. Substrate contacts are provided by residues asparagine 102 and 128 to 130 (SGG). Catalysis depends on lysine 183, which acts as the Proton acceptor. 186 to 187 (HN) serves as a coordination point for substrate. Glutamate 190 serves as the catalytic Proton donor. 5 residues coordinate substrate: tyrosine 191, lysine 260, arginine 287, arginine 445, and histidine 451.

It belongs to the 6-phosphogluconate dehydrogenase family. Homodimer.

It carries out the reaction 6-phospho-D-gluconate + NADP(+) = D-ribulose 5-phosphate + CO2 + NADPH. Its pathway is carbohydrate degradation; pentose phosphate pathway; D-ribulose 5-phosphate from D-glucose 6-phosphate (oxidative stage): step 3/3. Functionally, catalyzes the oxidative decarboxylation of 6-phosphogluconate to ribulose 5-phosphate and CO(2), with concomitant reduction of NADP to NADPH. The polypeptide is 6-phosphogluconate dehydrogenase, decarboxylating (gnd) (Shigella flexneri).